A 372-amino-acid chain; its full sequence is 3-isopropylmalate dehydrogenase (372 aa).

79–90 (GPKWQGGAVRPE) contributes to the NAD(+) binding site. Substrate is bound by residues Arg97, Arg107, Arg136, and Asp225. Mg(2+) is bound by residues Asp225, Asp250, and Asp254. 289–300 (GSAPDLPAGKAN) serves as a coordination point for NAD(+).

It belongs to the isocitrate and isopropylmalate dehydrogenases family. In terms of assembly, homodimer. Mg(2+) is required as a cofactor. Mn(2+) serves as cofactor.

It localises to the cytoplasm. It carries out the reaction (2R,3S)-3-isopropylmalate + NAD(+) = 4-methyl-2-oxopentanoate + CO2 + NADH. It participates in amino-acid biosynthesis; L-leucine biosynthesis; L-leucine from 3-methyl-2-oxobutanoate: step 3/4. Functionally, catalyzes the oxidation of 3-carboxy-2-hydroxy-4-methylpentanoate (3-isopropylmalate) to 3-carboxy-4-methyl-2-oxopentanoate. The product decarboxylates to 4-methyl-2 oxopentanoate. This Eremothecium gossypii (strain ATCC 10895 / CBS 109.51 / FGSC 9923 / NRRL Y-1056) (Yeast) protein is 3-isopropylmalate dehydrogenase (LEU2).